Here is a 214-residue protein sequence, read N- to C-terminus: Cytochrome b (214 aa).

A run of 4 helical transmembrane segments spans residues 31–51 (FGSM…FLAI), 75–96 (WIMQ…YIHI), 111–131 (WLSG…GYVL), and 176–196 (FFAL…IHIL). Residues histidine 81 and histidine 95 each coordinate heme b. Heme b-binding residues include histidine 180 and histidine 194. Histidine 199 provides a ligand contact to a ubiquinone.

The protein belongs to the cytochrome b family. The cytochrome bc1 complex contains 3 respiratory subunits (MT-CYB, CYC1 and UQCRFS1), 2 core proteins (UQCRC1 and UQCRC2) and probably 6 low-molecular weight proteins. It depends on heme b as a cofactor.

The protein resides in the mitochondrion inner membrane. Its function is as follows. Component of the ubiquinol-cytochrome c reductase complex (complex III or cytochrome b-c1 complex) that is part of the mitochondrial respiratory chain. The b-c1 complex mediates electron transfer from ubiquinol to cytochrome c. Contributes to the generation of a proton gradient across the mitochondrial membrane that is then used for ATP synthesis. In Trimeresurus stejnegeri (Chinese green tree viper), this protein is Cytochrome b (MT-CYB).